A 120-amino-acid chain; its full sequence is Ribonuclease P protein component (120 aa).

Belongs to the RnpA family. As to quaternary structure, consists of a catalytic RNA component (M1 or rnpB) and a protein subunit.

The enzyme catalyses Endonucleolytic cleavage of RNA, removing 5'-extranucleotides from tRNA precursor.. In terms of biological role, RNaseP catalyzes the removal of the 5'-leader sequence from pre-tRNA to produce the mature 5'-terminus. It can also cleave other RNA substrates such as 4.5S RNA. The protein component plays an auxiliary but essential role in vivo by binding to the 5'-leader sequence and broadening the substrate specificity of the ribozyme. This is Ribonuclease P protein component from Dehalococcoides mccartyi (strain CBDB1).